A 405-amino-acid chain; its full sequence is Dihydrolipoyllysine-residue succinyltransferase component of 2-oxoglutarate dehydrogenase complex (405 aa).

The Lipoyl-binding domain occupies 3 to 78 (SVDILVPDLP…TSRQILGRLR (76 aa)). Residue K44 is modified to N6-lipoyllysine. Residues 75–111 (GRLREGNSAGKETSAKSEEKASTPAQRQQASLEEQNN) form a disordered region. The segment covering 97–111 (TPAQRQQASLEEQNN) has biased composition (polar residues). Residues 113-150 (ALSPAIRRLLAEHNLDASAIKGTGVGGRLTREDVEKHL) form the Peripheral subunit-binding (PSBD) domain. K148 is modified (N6-acetyllysine). The span at 153 to 173 (APAKESAPAAAAPAAQPALAA) shows a compositional bias: low complexity. The segment at 153–178 (APAKESAPAAAAPAAQPALAARSEKR) is disordered. Residues H376 and D380 contribute to the active site.

The protein belongs to the 2-oxoacid dehydrogenase family. Forms a 24-polypeptide structural core with octahedral symmetry. Part of the 2-oxoglutarate dehydrogenase (OGDH) complex composed of E1 (2-oxoglutarate dehydrogenase), E2 (dihydrolipoamide succinyltransferase) and E3 (dihydrolipoamide dehydrogenase); the complex contains multiple copies of the three enzymatic components (E1, E2 and E3). Interacts with SucA (via N-terminus), the E1 component of OGDH complex. The cofactor is (R)-lipoate.

The catalysed reaction is N(6)-[(R)-dihydrolipoyl]-L-lysyl-[protein] + succinyl-CoA = N(6)-[(R)-S(8)-succinyldihydrolipoyl]-L-lysyl-[protein] + CoA. It participates in amino-acid degradation; L-lysine degradation via saccharopine pathway; glutaryl-CoA from L-lysine: step 6/6. E2 component of the 2-oxoglutarate dehydrogenase (OGDH) complex which catalyzes the second step in the conversion of 2-oxoglutarate to succinyl-CoA and CO(2). This chain is Dihydrolipoyllysine-residue succinyltransferase component of 2-oxoglutarate dehydrogenase complex (sucB), found in Escherichia coli O157:H7.